Here is a 278-residue protein sequence, read N- to C-terminus: Small ribosomal subunit protein uS9m (278 aa).

Residues 1 to 10 (MFSRLSLFRR) constitute a mitochondrion transit peptide. Positions 259–278 (VERKKPGKKKARKMPTWVKR) are disordered.

This sequence belongs to the universal ribosomal protein uS9 family. In terms of assembly, component of the mitochondrial small ribosomal subunit (mt-SSU). Mature yeast 74S mitochondrial ribosomes consist of a small (37S) and a large (54S) subunit. The 37S small subunit contains a 15S ribosomal RNA (15S mt-rRNA) and 34 different proteins. The 54S large subunit contains a 21S rRNA (21S mt-rRNA) and 46 different proteins.

The protein localises to the mitochondrion. Component of the mitochondrial ribosome (mitoribosome), a dedicated translation machinery responsible for the synthesis of mitochondrial genome-encoded proteins, including at least some of the essential transmembrane subunits of the mitochondrial respiratory chain. The mitoribosomes are attached to the mitochondrial inner membrane and translation products are cotranslationally integrated into the membrane. This Saccharomyces cerevisiae (strain ATCC 204508 / S288c) (Baker's yeast) protein is Small ribosomal subunit protein uS9m (MRPS9).